We begin with the raw amino-acid sequence, 156 residues long: Small ribosomal subunit protein uS7 (156 aa).

The protein belongs to the universal ribosomal protein uS7 family. Part of the 30S ribosomal subunit. Contacts proteins S9 and S11.

One of the primary rRNA binding proteins, it binds directly to 16S rRNA where it nucleates assembly of the head domain of the 30S subunit. Is located at the subunit interface close to the decoding center, probably blocks exit of the E-site tRNA. This chain is Small ribosomal subunit protein uS7, found in Methylibium petroleiphilum (strain ATCC BAA-1232 / LMG 22953 / PM1).